The chain runs to 525 residues: Mannuronan C5-epimerase AlgG (525 aa).

A signal peptide spans 1-29 (MNVQRKLASTQLKPVLLGVLLATSAWSQA). PbH1 repeat units follow at residues 287–309 (ADDVVLKGNTYRDNIIYGIDPHD), 311–334 (SERLVIAENHVYGTKKKHGIIVSR), 336–358 (VNNSWIINNRTHDNKLSGIVLDR), 360–382 (SEHNLVAYNEVYQNHSDGITLYE), and 383–405 (SSNNLIWGNRLINNARHGIRMRN). The active-site Proton acceptor is His-308.

Belongs to the D-mannuronate C5-epimerase family.

Its subcellular location is the periplasm. The catalysed reaction is [(1-&gt;4)-beta-D-mannuronosyl](n) = [alginate](n). Its pathway is glycan biosynthesis; alginate biosynthesis. With respect to regulation, inhibited by zinc. Catalyzes the epimerization of beta-D-mannuronate to alpha-L-guluronate during the synthesis of the linear polysaccharide alginate. In addition, is part of a periplasmic protein complex that protects alginate from degradation by AlgL by channeling the newly formed alginate polymer through a scaffold that transfers the alginate polymer through the periplasmic space to the outer membrane secretin AlgE. This chain is Mannuronan C5-epimerase AlgG, found in Azotobacter vinelandii.